We begin with the raw amino-acid sequence, 201 residues long: Small ribosomal subunit protein uS4 (201 aa).

The tract at residues 28–47 (KKNYPPGQHGNSRKRKTSEY) is disordered. The S4 RNA-binding domain occupies 92–155 (GRLDNIVFRL…KSLEVIANSL (64 aa)).

This sequence belongs to the universal ribosomal protein uS4 family. In terms of assembly, part of the 30S ribosomal subunit. Contacts protein S5. The interaction surface between S4 and S5 is involved in control of translational fidelity.

One of the primary rRNA binding proteins, it binds directly to 16S rRNA where it nucleates assembly of the body of the 30S subunit. Functionally, with S5 and S12 plays an important role in translational accuracy. This Bacteroides fragilis (strain YCH46) protein is Small ribosomal subunit protein uS4.